The following is a 235-amino-acid chain: uncharacterized protein (235 aa).

2 disordered regions span residues 1-36 (MGMLAPGPLQGRRPRKGHKGQEDAVAPGCKASGRGS) and 213-235 (VKTRKSKRRSGEGSHLTTSILEQ).

This is an uncharacterized protein from Homo sapiens (Human).